The primary structure comprises 307 residues: Pseudouridine-5'-phosphate glycosidase (307 aa).

Glu-26 acts as the Proton donor in catalysis. Substrate is bound by residues Lys-88 and Val-108. A Mn(2+)-binding site is contributed by Asp-140. A substrate-binding site is contributed by 142 to 144 (SAD). Catalysis depends on Lys-161, which acts as the Nucleophile.

The protein belongs to the pseudouridine-5'-phosphate glycosidase family. Homotrimer. The cofactor is Mn(2+).

The catalysed reaction is D-ribose 5-phosphate + uracil = psi-UMP + H2O. Functionally, catalyzes the reversible cleavage of pseudouridine 5'-phosphate (PsiMP) to ribose 5-phosphate and uracil. Functions biologically in the cleavage direction, as part of a pseudouridine degradation pathway. The sequence is that of Pseudouridine-5'-phosphate glycosidase from Clostridium botulinum (strain Langeland / NCTC 10281 / Type F).